A 394-amino-acid polypeptide reads, in one-letter code: NAD(P)H-quinone oxidoreductase subunit H (394 aa).

It belongs to the complex I 49 kDa subunit family. NDH-1 can be composed of about 15 different subunits; different subcomplexes with different compositions have been identified which probably have different functions.

Its subcellular location is the cellular thylakoid membrane. The catalysed reaction is a plastoquinone + NADH + (n+1) H(+)(in) = a plastoquinol + NAD(+) + n H(+)(out). It catalyses the reaction a plastoquinone + NADPH + (n+1) H(+)(in) = a plastoquinol + NADP(+) + n H(+)(out). Functionally, NDH-1 shuttles electrons from an unknown electron donor, via FMN and iron-sulfur (Fe-S) centers, to quinones in the respiratory and/or the photosynthetic chain. The immediate electron acceptor for the enzyme in this species is believed to be plastoquinone. Couples the redox reaction to proton translocation, and thus conserves the redox energy in a proton gradient. Cyanobacterial NDH-1 also plays a role in inorganic carbon-concentration. The polypeptide is NAD(P)H-quinone oxidoreductase subunit H (Acaryochloris marina (strain MBIC 11017)).